We begin with the raw amino-acid sequence, 252 residues long: Tabinhibitin 9 (252 aa).

The N-terminal stretch at 1–23 is a signal peptide; that stretch reads MTSNLYYVLISPYSLAYMVQYRS. Residues 32–34 carry the Cell attachment site motif; the sequence is RGD. The SCP domain maps to 63–207; the sequence is YIRSTMCEIM…KARAFFTCNF (145 aa).

Belongs to the CRISP family. As to expression, expressed in salivary glands.

The protein resides in the secreted. Inhibits platelet aggregation induced by all agonists tested (ADP, arachidonic acid, the thromboxane A2 analog U46619, thrombin, and snake venom snaclecs (TMVA that activates platelet through GPIB, and stejnulxin that specifically acts through GPVI (GP6))). May act by competing with fibrinogen for binding to glycoprotein IIb/IIIa (ITGA2B/ITGB3). The polypeptide is Tabinhibitin 9 (Tabanus yao (Horsefly)).